A 644-amino-acid chain; its full sequence is Fructose-1,6-bisphosphatase class 3 (644 aa).

It belongs to the FBPase class 3 family. Mn(2+) serves as cofactor.

It carries out the reaction beta-D-fructose 1,6-bisphosphate + H2O = beta-D-fructose 6-phosphate + phosphate. The protein operates within carbohydrate biosynthesis; gluconeogenesis. This Oceanobacillus iheyensis (strain DSM 14371 / CIP 107618 / JCM 11309 / KCTC 3954 / HTE831) protein is Fructose-1,6-bisphosphatase class 3.